Consider the following 92-residue polypeptide: Small ribosomal subunit protein uS19 (92 aa).

It belongs to the universal ribosomal protein uS19 family.

Functionally, protein S19 forms a complex with S13 that binds strongly to the 16S ribosomal RNA. The chain is Small ribosomal subunit protein uS19 from Thermosynechococcus vestitus (strain NIES-2133 / IAM M-273 / BP-1).